Here is a 177-residue protein sequence, read N- to C-terminus: Probetacellulin (177 aa).

A signal peptide spans 1 to 31 (MDPTAPGSSVSSLPLLLVLALGLAILHCVVA). Topologically, residues 32–118 (DGNTTRTPET…LFYLQQDRGQ (87 aa)) are extracellular. Asn34, Asn42, and Asn52 each carry an N-linked (GlcNAc...) asparagine glycan. An EGF-like domain is found at 65 to 105 (HFSRCPKQYKHYCIHGRCRFVVDEQTPSCICEKGYFGARCE). Disulfide bonds link Cys69-Cys82, Cys77-Cys93, and Cys95-Cys104. The propeptide at 112-177 (LQQDRGQILV…SEDIQETNIA (66 aa)) is removed in mature form. A helical transmembrane segment spans residues 119–139 (ILVVCLIVVMVVFIILVIGVC). Over 140-177 (TCCHPLRKHRKKKKEEKMETLDKDKTPISEDIQETNIA) the chain is Cytoplasmic. The disordered stretch occupies residues 153–177 (KEEKMETLDKDKTPISEDIQETNIA). The segment covering 154 to 167 (EEKMETLDKDKTPI) has biased composition (basic and acidic residues).

As to quaternary structure, monomer. Interacts with EGFR and ERBB4. In terms of tissue distribution, found in several mouse tissues including kidney, uterus and liver, as well as in beta tumor cell line and MCF-7 cells. It is not detected in the brain.

Its subcellular location is the secreted. It localises to the extracellular space. It is found in the cell membrane. Its function is as follows. Growth factor that binds to EGFR, ERBB4 and other EGF receptor family members. Potent mitogen for retinal pigment epithelial cells and vascular smooth muscle cells. This Mus musculus (Mouse) protein is Probetacellulin (Btc).